We begin with the raw amino-acid sequence, 1429 residues long: Nitric oxide synthase 1 (1429 aa).

An interaction with NOSIP region spans residues 1-200 (MEEHTFGVQQ…LQDSGEQDEL (200 aa)). The 83-residue stretch at 17 to 99 (SVRLFKRKVG…ETHVVLILRG (83 aa)) folds into the PDZ domain. 2 disordered regions span residues 114-174 (DGTP…SVSQ) and 271-298 (NNPYSENEQSPASGKQSPTKNGSPSRCP). The interaction with DYNLL1/PIN stretch occupies residues 163–240 (QGRGQGAGSV…TGIQVDRDLD (78 aa)). Residues 272-294 (NPYSENEQSPASGKQSPTKNGSP) show a composition bias toward polar residues. A Phosphoserine modification is found at Ser280. Ser334 provides a ligand contact to (6R)-L-erythro-5,6,7,8-tetrahydrobiopterin. Cys415 is a binding site for heme b. Positions 478, 587, 588, and 592 each coordinate L-arginine. Positions 677, 678, and 691 each coordinate (6R)-L-erythro-5,6,7,8-tetrahydrobiopterin. Tyr706 contacts heme b. Residues 725 to 745 (KRRAIGFKKLAEAVKFSAKLM) are calmodulin-binding. The Flavodoxin-like domain maps to 755-935 (ATILYATETG…AFRTWAKKVF (181 aa)). Thr761, Glu762, Thr763, Lys765, Ser766, Ser807, Thr808, and Gly812 together coordinate FMN. Ser847, Ser857, and Ser858 each carry phosphoserine. Positions 886, 891, 893, 919, and 923 each coordinate FMN. Positions 990 to 1237 (KRVSAARLLS…VRGAPSFHLP (248 aa)) constitute an FAD-binding FR-type domain. An NADP(+)-binding site is contributed by Arg1010. FAD contacts are provided by His1032, Arg1173, Tyr1174, Tyr1175, Ser1176, Thr1191, and Ala1193. Position 1196 (Ser1196) interacts with NADP(+). FAD-binding residues include Tyr1197, Val1210, Cys1211, and Ser1212. Positions 1251, 1284, 1313, 1314, 1320, 1322, 1324, 1357, 1398, and 1400 each coordinate NADP(+).

It belongs to the NOS family. In terms of assembly, homodimer. Interacts with DLG4; the interaction possibly being prevented by the association between NOS1 and CAPON. Forms a ternary complex with CAPON and RASD1. Forms a ternary complex with CAPON and SYN1. Interacts with ZDHHC23. Interacts with NOSIP; which may impair its synaptic location. Interacts with HTR4. Interacts with VAC14. Interacts (via N-terminal domain) with DLG4 (via N-terminal tandem pair of PDZ domains). Interacts with SLC6A4. Forms a complex with ASL, ASS1 and SLC7A1; the complex regulates cell-autonomous L-arginine synthesis and citrulline recycling while channeling extracellular L-arginine to nitric oxide synthesis pathway. Interacts with DMD; localizes NOS1 to sarcolemma in muscle cells. Interacts with DYNLL1; inhibits the nitric oxide synthase activity. Heme b is required as a cofactor. The cofactor is FAD. It depends on FMN as a cofactor. Requires (6R)-L-erythro-5,6,7,8-tetrahydrobiopterin as cofactor. Post-translationally, ubiquitinated; mediated by STUB1/CHIP in the presence of Hsp70 and Hsp40 (in vitro). As to expression, widely expressed in the nervous system: expressed in cerebrum, olfactory bulb, hippocampus, midbrain, cerebellum, pons, medulla oblongata, and spinal cord. Also found in skeletal muscle, where it is localized beneath the sarcolemma of fast twitch muscle fibers, and in spleen, heart, kidney, and liver. N-NOS-1 and N-NOS-2 are found in all parts of the nervous system. NNOS beta and gamma occur in a region-specific manner in the brain and NNOS beta expression is developmentally regulated. NNOS Mu is only found in mature skeletal and cardiac muscles.

Its subcellular location is the cell membrane. The protein resides in the sarcolemma. It is found in the cell projection. The protein localises to the dendritic spine. The catalysed reaction is 2 L-arginine + 3 NADPH + 4 O2 + H(+) = 2 L-citrulline + 2 nitric oxide + 3 NADP(+) + 4 H2O. With respect to regulation, stimulated by calcium/calmodulin. Inhibited by DYNLL1 that prevents the dimerization of the protein. Inhibited by NOSIP. Functionally, produces nitric oxide (NO) which is a messenger molecule with diverse functions throughout the body. In the brain and peripheral nervous system, NO displays many properties of a neurotransmitter. Probably has nitrosylase activity and mediates cysteine S-nitrosylation of cytoplasmic target proteins such SRR. Isoform NNOS Mu may be an effector enzyme for the dystrophin complex. This Mus musculus (Mouse) protein is Nitric oxide synthase 1.